The chain runs to 336 residues: Probable G-protein coupled receptor 160 (336 aa).

Topologically, residues 1-20 are extracellular; sequence MTALSSKNCSLQYQLHQSPQ. N-linked (GlcNAc...) asparagine glycosylation is present at N8. The chain crosses the membrane as a helical span at residues 21–41; sequence LLEASCLLFLIILGKVLLNIL. The Cytoplasmic segment spans residues 42–56; it reads LLRVRRGDARWTLME. The helical transmembrane segment at 57-77 threads the bilayer; it reads YFCFSLALVDLLLLVNISILT. Residues 78–95 lie on the Extracellular side of the membrane; it reads YFRDFVVLGIRFTRYHIC. The chain crosses the membrane as a helical span at residues 96 to 116; sequence LLTQIISFTYGFLHYPVCSLA. Over 117–136 the chain is Cytoplasmic; sequence CIDYWCNLSRASKQSSRWQK. Residues 137-157 form a helical membrane-spanning segment; the sequence is LLYFLTVILTWISVLAYVLVD. Residues 158-186 are Extracellular-facing; sequence PAISVSLKAHRGYVYQCPAYVSTQSHWLS. Residues 187–207 traverse the membrane as a helical segment; that stretch reads LSMLMVLFVAFLISWQEVVAL. The Cytoplasmic segment spans residues 208–243; it reads LQAMRIASYKSKAALYFPFPLHCGYALSCREALLPR. A helical transmembrane segment spans residues 244–264; that stretch reads LIVCFLGTWFPFVALQVLILS. The Extracellular portion of the chain corresponds to 265 to 272; it reads LRVQIPAY. Residues 273-293 form a helical membrane-spanning segment; that stretch reads IEMNVPWLYFVNSFLIAAVYW. The Cytoplasmic portion of the chain corresponds to 294–336; sequence FNCHKLDLRDSSLPVDPFINWKCCFVPVHRLKQVERPMSIVIC.

Belongs to the G-protein coupled receptor 1 family.

Its subcellular location is the cell membrane. Functionally, orphan receptor. The sequence is that of Probable G-protein coupled receptor 160 (Gpr160) from Mus musculus (Mouse).